Here is a 292-residue protein sequence, read N- to C-terminus: Elongation factor Ts (292 aa).

The interval 79-82 (TDFV) is involved in Mg(2+) ion dislocation from EF-Tu.

This sequence belongs to the EF-Ts family.

The protein localises to the cytoplasm. Associates with the EF-Tu.GDP complex and induces the exchange of GDP to GTP. It remains bound to the aminoacyl-tRNA.EF-Tu.GTP complex up to the GTP hydrolysis stage on the ribosome. The chain is Elongation factor Ts from Xanthomonas campestris pv. campestris (strain B100).